Consider the following 64-residue polypeptide: Translational regulator CsrA (64 aa).

This sequence belongs to the CsrA/RsmA family. Homodimer; the beta-strands of each monomer intercalate to form a hydrophobic core, while the alpha-helices form wings that extend away from the core.

The protein localises to the cytoplasm. In terms of biological role, a key translational regulator that binds mRNA to regulate translation initiation and/or mRNA stability. Mediates global changes in gene expression, shifting from rapid growth to stress survival by linking envelope stress, the stringent response and the catabolite repression systems. Usually binds in the 5'-UTR; binding at or near the Shine-Dalgarno sequence prevents ribosome-binding, repressing translation, binding elsewhere in the 5'-UTR can activate translation and/or stabilize the mRNA. Its function is antagonized by small RNA(s). The protein is Translational regulator CsrA of Thioalkalivibrio sulfidiphilus (strain HL-EbGR7).